Here is a 59-residue protein sequence, read N- to C-terminus: Large ribosomal subunit protein bL32 (59 aa).

The segment at 1 to 59 (MAVQQNKKSPSKRGMHRSHDFLTTSPLAVEPSTGEVHLRHHISPNGYYRGKKVVKTKND) is disordered. The segment covering 49-59 (RGKKVVKTKND) has biased composition (basic residues).

Belongs to the bacterial ribosomal protein bL32 family.

The protein is Large ribosomal subunit protein bL32 of Burkholderia mallei (strain NCTC 10247).